The following is a 265-amino-acid chain: MSDLISQNLNMIFKTPKGETVHALKDVNFTLKKGELLTVLGPSGCGKTTLLNITAGFLRPTSGAIALNGNEIDGPGVERGMVFQQGALFEWLTVAENVDFGLRMKKEDPVKTAKKVEEWLNIVGLQGFGNTPTYQLSGGMQQRVALARCLINDPDLILMDEPLGALDALTREKMQSLVLKIWKETGKTIILITHSVEEALLLGERLYVMAPRPGRIHKEYNLPFASMGIDGDLREIKKTPNFVSTREEILTMIWNMEEEIMGKDI.

Residues 7–236 enclose the ABC transporter domain; the sequence is QNLNMIFKTP…MGIDGDLREI (230 aa). 41–48 lines the ATP pocket; it reads GPSGCGKT.

This sequence belongs to the ABC transporter superfamily. Taurine importer (TC 3.A.1.17.1) family. In terms of assembly, the complex is composed of two ATP-binding proteins (TauB), two transmembrane proteins (TauC) and a solute-binding protein (TauA).

The protein localises to the cell inner membrane. It catalyses the reaction taurine(out) + ATP + H2O = taurine(in) + ADP + phosphate + H(+). Its function is as follows. Part of the ABC transporter complex TauABC involved in taurine import. Responsible for energy coupling to the transport system. The polypeptide is Taurine import ATP-binding protein TauB (Pelagibacter ubique (strain HTCC1062)).